A 156-amino-acid chain; its full sequence is Cyanate hydratase (156 aa).

Active-site residues include arginine 96, glutamate 99, and serine 122.

The protein belongs to the cyanase family.

The enzyme catalyses cyanate + hydrogencarbonate + 3 H(+) = NH4(+) + 2 CO2. Catalyzes the reaction of cyanate with bicarbonate to produce ammonia and carbon dioxide. The chain is Cyanate hydratase from Pseudomonas entomophila (strain L48).